Here is an 830-residue protein sequence, read N- to C-terminus: MEKASKNKESGVKKANNSFLQNFGVNTAGKENESTSLPRLPKSEDESIPKQSIKSKNKKKTQHFLSDAFESLKRQEIDTNEKEVIVSAPITSKPAQVFYSKKLERKDEGIRKWEKDPFAPISVKSGAWKKPYTKVPEVSINKATSKRTDLINDKPIVIPIPRASTSTLYFGKHNKPTSENRKGPIGIPTEEILTSQNTQAMLHKLFENNVLDNVKDDSMQRQSSFIPGMHIRLLDHQVQGLTWLKSRETVSKSSASGGILADDMGLGKTIQMIALILSHPLPKKKHSIKSTLVVAPLSLIKQWESEVQTKSKLTAIVYHGASRYKLLKVIHEYDVVITTYQILVSEWVSHNTTGTDGKSPTEAKSYEKKKPSLFAFYWWRIILDEAHTIKNKSSKSALACCALQGINRWCLTGTPLQNNVDELYSLVKFLHINPFNDQSVWKDQISLPLCQGEENLVFKRLRMLLSVIMLRRTKTLLEANAGKDGTGGALKLSKRLVYKVICKFEESERDFYSNLARNMERTMSNFVNSGKLGKNYTNILCLLLRLRQACNHPQSLNFQFEQDVDAFNALDGAANTNKLASDQDVDDLANLLETVEIGSRKKSFCTICMAELPPDFHEKKCKDCSRNFKELDKGIQDPNDKTLYKSSKIREILKILSLDEQEEDDTVRGLRKTIIFSQFTTFLDIIDLHLRKAGIGFVRYDGRMNNRAREKSLDLLRSDSGTQVLLCSLKCGALGLNLTCASRVILCDVWWNPAIEEQAIDRVHRIGQRRDVLVYKLVVENTIEEKIVELQNLKRDLAKQALGDGKKSVFTSKKLTLNDLLFLFNKRAAA.

Residues 1–12 show a composition bias toward basic and acidic residues; the sequence is MEKASKNKESGV. The interval 1–61 is disordered; sequence MEKASKNKES…SIKSKNKKKT (61 aa). Residues 15 to 25 show a composition bias toward polar residues; sequence ANNSFLQNFGV. In terms of domain architecture, Helicase ATP-binding spans 249 to 433; it reads TVSKSSASGG…YSLVKFLHIN (185 aa). 262-269 lines the ATP pocket; sequence DDMGLGKT. The DEAH box motif lies at 384–387; that stretch reads DEAH. The Helicase C-terminal domain maps to 662-816; the sequence is EEDDTVRGLR…KSVFTSKKLT (155 aa). Serine 712 bears the Phosphoserine mark.

Belongs to the SNF2/RAD54 helicase family.

The protein localises to the nucleus. This is an uncharacterized protein from Schizosaccharomyces pombe (strain 972 / ATCC 24843) (Fission yeast).